Reading from the N-terminus, the 135-residue chain is Holo-[acyl-carrier-protein] synthase (135 aa).

Residues Asp8 and Glu58 each contribute to the Mg(2+) site.

This sequence belongs to the P-Pant transferase superfamily. AcpS family. The cofactor is Mg(2+).

It is found in the cytoplasm. It catalyses the reaction apo-[ACP] + CoA = holo-[ACP] + adenosine 3',5'-bisphosphate + H(+). Functionally, transfers the 4'-phosphopantetheine moiety from coenzyme A to a Ser of acyl-carrier-protein. This chain is Holo-[acyl-carrier-protein] synthase, found in Ligilactobacillus salivarius (strain UCC118) (Lactobacillus salivarius).